Reading from the N-terminus, the 425-residue chain is MPVDQSFNAPLSEVDPEIAAVLEQELGRQRGTLEMIASENFVPRAVLQSQGSVLTNKYAEGYPGRRYYGGCEFVDVAEQLAIDRAKSLFGAEFANVQPHSGATANAAVLAAIAQPGDMILGLELAHGGHLTHGMKLNFSGKLYDAAAYGVDPDTFLIDMDVVREKALAHRPQVIIAGWSAYPRHLDFAAFRSIADEVGAKLWVDMAHFAGLVAAGVHPSPVPYADVVSSTVHKTLAGPRSGVILSRDTALAKKLNSAVFPGQQGGPLMHVIAAKATAFKIAATEEFADRQRRTIQGAQILAERLVAADSTEAGVSVLTGGTDVHLVLADLRNSPIDGKQAEDALHEVGITVNRNSVPFDPRPPMVTSGVRIGTSALATRGFGETEFTEVADIIAETLKPDSDLAALRARVLTLTDGFPLYEGLTQ.

Residues leucine 124 and 128–130 (GHL) contribute to the (6S)-5,6,7,8-tetrahydrofolate site. Lysine 233 carries the post-translational modification N6-(pyridoxal phosphate)lysine.

Belongs to the SHMT family. As to quaternary structure, homodimer. The cofactor is pyridoxal 5'-phosphate.

The protein resides in the cytoplasm. It carries out the reaction (6R)-5,10-methylene-5,6,7,8-tetrahydrofolate + glycine + H2O = (6S)-5,6,7,8-tetrahydrofolate + L-serine. It functions in the pathway one-carbon metabolism; tetrahydrofolate interconversion. Its pathway is amino-acid biosynthesis; glycine biosynthesis; glycine from L-serine: step 1/1. Its function is as follows. Catalyzes the reversible interconversion of serine and glycine with tetrahydrofolate (THF) serving as the one-carbon carrier. This reaction serves as the major source of one-carbon groups required for the biosynthesis of purines, thymidylate, methionine, and other important biomolecules. Also exhibits THF-independent aldolase activity toward beta-hydroxyamino acids, producing glycine and aldehydes, via a retro-aldol mechanism. The chain is Serine hydroxymethyltransferase from Clavibacter michiganensis subsp. michiganensis (strain NCPPB 382).